A 95-amino-acid polypeptide reads, in one-letter code: Cell division topological specificity factor (95 aa).

It belongs to the MinE family.

In terms of biological role, prevents the cell division inhibition by proteins MinC and MinD at internal division sites while permitting inhibition at polar sites. This ensures cell division at the proper site by restricting the formation of a division septum at the midpoint of the long axis of the cell. This chain is Cell division topological specificity factor, found in Methylorubrum extorquens (strain CM4 / NCIMB 13688) (Methylobacterium extorquens).